The sequence spans 391 residues: S-adenosylmethionine synthase (391 aa).

His-14 contributes to the ATP binding site. Asp-16 lines the Mg(2+) pocket. Glu-42 contacts K(+). Positions 55 and 98 each coordinate L-methionine. Residues Gln-98–Glu-108 are flexible loop. ATP-binding positions include Asp-172–Lys-174, Arg-238–Phe-239, Asp-247, Arg-253–Lys-254, Ala-270, and Lys-274. Asp-247 serves as a coordination point for L-methionine. Lys-278 contacts L-methionine.

It belongs to the AdoMet synthase family. As to quaternary structure, homotetramer; dimer of dimers. Mg(2+) serves as cofactor. K(+) is required as a cofactor.

It localises to the cytoplasm. It carries out the reaction L-methionine + ATP + H2O = S-adenosyl-L-methionine + phosphate + diphosphate. It participates in amino-acid biosynthesis; S-adenosyl-L-methionine biosynthesis; S-adenosyl-L-methionine from L-methionine: step 1/1. Functionally, catalyzes the formation of S-adenosylmethionine (AdoMet) from methionine and ATP. The overall synthetic reaction is composed of two sequential steps, AdoMet formation and the subsequent tripolyphosphate hydrolysis which occurs prior to release of AdoMet from the enzyme. The chain is S-adenosylmethionine synthase from Clostridium botulinum (strain Langeland / NCTC 10281 / Type F).